We begin with the raw amino-acid sequence, 553 residues long: Thermosome subunit beta (553 aa).

Residues 534-553 are disordered; the sequence is KKSEGKTGEKKESEKGKEED.

Belongs to the TCP-1 chaperonin family. Forms a Heterooligomeric complex of two stacked eight-membered rings.

Functionally, molecular chaperone; binds unfolded polypeptides in vitro, and has a weak ATPase activity. The sequence is that of Thermosome subunit beta (thsB) from Sulfolobus acidocaldarius (strain ATCC 33909 / DSM 639 / JCM 8929 / NBRC 15157 / NCIMB 11770).